The primary structure comprises 138 residues: Abscisic stress-ripening protein 5 (138 aa).

Residues 1–13 (MAEEKHHHHLFHH) show a composition bias toward basic residues. 2 disordered regions span residues 1–27 (MAEE…DSYG) and 106–138 (GAGG…HLFG).

This sequence belongs to the abscisic acid and water stress-induced protein family.

The protein localises to the nucleus. The protein resides in the cytoplasm. Its function is as follows. Involved in tolerance to aluminum. Regulates the expression of different genes that collectively contribute to the protection of the cell in response to aluminum stress. The sequence is that of Abscisic stress-ripening protein 5 from Oryza sativa subsp. indica (Rice).